The primary structure comprises 346 residues: Phosphoribosylformylglycinamidine cyclo-ligase (346 aa).

Belongs to the AIR synthase family.

It localises to the cytoplasm. It catalyses the reaction 2-formamido-N(1)-(5-O-phospho-beta-D-ribosyl)acetamidine + ATP = 5-amino-1-(5-phospho-beta-D-ribosyl)imidazole + ADP + phosphate + H(+). Its pathway is purine metabolism; IMP biosynthesis via de novo pathway; 5-amino-1-(5-phospho-D-ribosyl)imidazole from N(2)-formyl-N(1)-(5-phospho-D-ribosyl)glycinamide: step 2/2. The sequence is that of Phosphoribosylformylglycinamidine cyclo-ligase from Bacillus thuringiensis subsp. konkukian (strain 97-27).